A 1394-amino-acid chain; its full sequence is DNA-directed RNA polymerase subunit beta (1394 aa).

Belongs to the RNA polymerase beta chain family. The RNAP catalytic core consists of 2 alpha, 1 beta, 1 beta' and 1 omega subunit. When a sigma factor is associated with the core the holoenzyme is formed, which can initiate transcription.

The catalysed reaction is RNA(n) + a ribonucleoside 5'-triphosphate = RNA(n+1) + diphosphate. Its function is as follows. DNA-dependent RNA polymerase catalyzes the transcription of DNA into RNA using the four ribonucleoside triphosphates as substrates. This chain is DNA-directed RNA polymerase subunit beta, found in Anaplasma phagocytophilum (Ehrlichia phagocytophila).